The following is a 186-amino-acid chain: Putative manganese efflux pump MntP (186 aa).

A run of 6 helical transmembrane segments spans residues 1 to 21 (MSFLTNFLLGLGLAMDAFAVS), 41 to 61 (VFFGGFQALMPVLGWVGGSAV), 62 to 82 (SGFVSDYAPWIAFGLLAFIGG), 105 to 127 (LFLLAVATSIDALAVGISFAFLG), 139 to 159 (CVTFVMSFCGAVLGYRIGHFF), and 163 to 183 (VEILGGLILIGLGVKILAEHM).

It belongs to the MntP (TC 9.B.29) family.

The protein resides in the cell membrane. Its function is as follows. Probably functions as a manganese efflux pump. This is Putative manganese efflux pump MntP from Methanosarcina mazei (strain ATCC BAA-159 / DSM 3647 / Goe1 / Go1 / JCM 11833 / OCM 88) (Methanosarcina frisia).